The primary structure comprises 393 residues: MGLLRGGLPCARAMARLGAVRSHYCALLLAAALAVCAFYYLGSGRETFSSATKRLKEARAGAPAAPSPPALELARGSVAPAPGAKAKSLEGGGAGPVDYHLLMMFTKAEHNAALQAKARVALRSLLRLAKFEAHEVLNLHFVSEEASREVAKGLLRELLPPAAGFKCKVIFHDVAVLTDKLFPIVEAMQKHFSAGLGTYYSDSIFFLSVAMHQIMPKEILQIIQLDLDLKFKTNIRELFEEFDSFLPGAIIGIAREMQPVYRHTFWQFRHENPQTRVGGPPPEGLPGFNSGVMLLNLEAMRQSPLYSRLLEPAQVQQLADKYHFRGHLGDQDFFTMIGMEHPKLFHVLDCTWNRQLCTWWRDHGYSDVFEAYFRCEGHVKIYHGNCNTPIPED.

Residues 1-23 (MGLLRGGLPCARAMARLGAVRSH) lie on the Cytoplasmic side of the membrane. Residues 24–44 (YCALLLAAALAVCAFYYLGSG) traverse the membrane as a helical; Signal-anchor for type II membrane protein segment. Over 45–393 (RETFSSATKR…GNCNTPIPED (349 aa)) the chain is Lumenal. 104–106 (MFT) provides a ligand contact to UDP-alpha-D-xylose. Residue aspartate 226 participates in Mn(2+) binding. Residue leucine 227 coordinates UDP-alpha-D-xylose. Aspartate 228 provides a ligand contact to Mn(2+). Positions 263–266 (HTFW) are interaction with target proteins. 3 residues coordinate UDP-alpha-D-xylose: serine 290, leucine 328, and glutamine 331. 2 residues coordinate a glycoprotein: glutamine 331 and tryptophan 360. Disulfide bonds link cysteine 350/cysteine 375 and cysteine 357/cysteine 386. A Mn(2+)-binding site is contributed by histidine 383. Residue asparagine 385 coordinates a glycoprotein.

Belongs to the glycosyltransferase 8 family. In terms of assembly, homodimer. Dimer formation may be essential for the retention in endoplasmic reticulum. Requires Mg(2+) as cofactor. Mn(2+) serves as cofactor.

It localises to the endoplasmic reticulum membrane. The catalysed reaction is 3-O-[alpha-D-xylosyl-(1-&gt;3)-beta-D-glucosyl]-L-seryl-[EGF-like domain protein] + UDP-alpha-D-xylose = 3-O-[alpha-D-xylosyl-(1-&gt;3)-alpha-D-xylosyl-(1-&gt;3)-beta-D-glucosyl]-L-seryl-[EGF-like domain protein] + UDP + H(+). In terms of biological role, alpha-1,3-xylosyltransferase, which elongates the O-linked xylose-glucose disaccharide attached to EGF-like repeats in the extracellular domain of target proteins by catalyzing the addition of the second xylose. Known targets include Notch proteins and coagulation factors, such as F9. The polypeptide is Xyloside xylosyltransferase 1 (XXYLT1) (Homo sapiens (Human)).